Reading from the N-terminus, the 337-residue chain is Phosphatidate cytidylyltransferase, mitochondrial (337 aa).

It belongs to the TAM41 family. Mg(2+) is required as a cofactor. In terms of tissue distribution, brain and liver.

Its subcellular location is the mitochondrion inner membrane. The catalysed reaction is a 1,2-diacyl-sn-glycero-3-phosphate + CTP + H(+) = a CDP-1,2-diacyl-sn-glycerol + diphosphate. It functions in the pathway phospholipid metabolism; CDP-diacylglycerol biosynthesis; CDP-diacylglycerol from sn-glycerol 3-phosphate: step 3/3. Catalyzes the conversion of phosphatidic acid (PA) to CDP-diacylglycerol (CDP-DAG), an essential intermediate in the synthesis of phosphatidylglycerol, cardiolipin and phosphatidylinositol. This chain is Phosphatidate cytidylyltransferase, mitochondrial (Tamm41), found in Rattus norvegicus (Rat).